The following is a 592-amino-acid chain: Protein kinase C zeta type (592 aa).

The 84-residue stretch at 15–98 (RVRLKAHYGG…EGLIIHVFPS (84 aa)) folds into the PB1 domain. Positions 79-145 (AFRLARQCRD…KRFNRRAYCG (67 aa)) are interaction with SQSTM1. The Phorbol-ester/DAG-type zinc finger occupies 130-180 (GHLFQAKRFNRRAYCGQCSERIWGLARQGYRCINCKLLVHKRCHGLVPLTC). The region spanning 252–518 (FDLIRVIGRG…FSDIKSHAFF (267 aa)) is the Protein kinase domain. ATP contacts are provided by residues 258-266 (IGRGSYAKV) and Lys-281. Asp-376 acts as the Proton acceptor in catalysis. Thr-410 bears the Phosphothreonine; by PDPK1 and PI3K mark. The region spanning 519-590 (RSIDWDLLEK…INPLLLSTEE (72 aa)) is the AGC-kinase C-terminal domain. The residue at position 560 (Thr-560) is a Phosphothreonine. A Phosphoserine modification is found at Ser-591.

It belongs to the protein kinase superfamily. AGC Ser/Thr protein kinase family. PKC subfamily. As to quaternary structure, forms a ternary complex with SQSTM1 and KCNAB2. Forms another ternary complex with SQSTM1 and GABRR3. Forms a complex with SQSTM1 and MAP2K5. Interacts with PARD6A, PARD6B, PARD6G and SQSTM1. Part of a complex with PARD3, PARD6A or PARD6B or PARD6G and CDC42 or RAC1. Interacts with ADAP1/CENTA1. Forms a ternary complex composed of SQSTM1 and PAWR. Interacts directly with SQSTM1. Interacts with IKBKB. Interacts (via the protein kinase domain) with WWC1. Forms a tripartite complex with WWC1 and DDR1, but predominantly in the absence of collagen. Component of the Par polarity complex, composed of at least phosphorylated PRKCZ, PARD3 and TIAM1. Interacts with PDPK1 (via N-terminal region). Interacts with WDFY2 (via WD repeats 1-3). Interacts with VAMP2. Forms a complex with WDFY2 and VAMP2. Interacts with APPL1. Interacts with WWC1, WWC2 and WWC3. In terms of processing, CDH5 is required for its phosphorylation at Thr-410. Phosphorylated by protein kinase PDPK1; phosphorylation is inhibited by the apoptotic C-terminal cleavage product of PKN2. Phosphorylation at Thr-410 by PI3K activates the kinase. Expressed in brain, and to a lesser extent in lung, kidney and testis.

The protein localises to the cytoplasm. It is found in the endosome. It localises to the cell junction. Its subcellular location is the membrane. The catalysed reaction is L-seryl-[protein] + ATP = O-phospho-L-seryl-[protein] + ADP + H(+). It catalyses the reaction L-threonyl-[protein] + ATP = O-phospho-L-threonyl-[protein] + ADP + H(+). With respect to regulation, atypical PKCs (PRKCI and PRKCZ) exhibit an elevated basal enzymatic activity (that may be due to the interaction with SMG1 or SQSTM1) and are not regulated by diacylglycerol, phosphatidylserine, phorbol esters or calcium ions. Two specific sites, Thr-410 (activation loop of the kinase domain) and Thr-560 (turn motif), need to be phosphorylated for its full activation. Phosphatidylinositol 3,4,5-trisphosphate might be a physiological activator. Isoform 2: Constitutively active. Its function is as follows. Calcium- and diacylglycerol-independent serine/threonine-protein kinase that functions in phosphatidylinositol 3-kinase (PI3K) pathway and mitogen-activated protein (MAP) kinase cascade, and is involved in NF-kappa-B activation, mitogenic signaling, cell proliferation, cell polarity, inflammatory response and maintenance of long-term potentiation (LTP). Upon lipopolysaccharide (LPS) treatment in macrophages, or following mitogenic stimuli, functions downstream of PI3K to activate MAP2K1/MEK1-MAPK1/ERK2 signaling cascade independently of RAF1 activation. Required for insulin-dependent activation of AKT3, but may function as an adapter rather than a direct activator. Upon insulin treatment may act as a downstream effector of PI3K and contribute to the activation of translocation of the glucose transporter SLC2A4/GLUT4 and subsequent glucose transport in adipocytes. In EGF-induced cells, binds and activates MAP2K5/MEK5-MAPK7/ERK5 independently of its kinase activity and can activate JUN promoter through MEF2C. Through binding with SQSTM1/p62, functions in interleukin-1 signaling and activation of NF-kappa-B with the specific adapters RIPK1 and TRAF6. Participates in TNF-dependent transactivation of NF-kappa-B by phosphorylating and activating IKBKB kinase, which in turn leads to the degradation of NF-kappa-B inhibitors. In migrating astrocytes, forms a cytoplasmic complex with PARD6A and is recruited by CDC42 to function in the establishment of cell polarity along with the microtubule motor and dynein. In association with FEZ1, stimulates neuronal differentiation in PC12 cells. In the inflammatory response, is required for the T-helper 2 (Th2) differentiation process, including interleukin production, efficient activation of JAK1 and the subsequent phosphorylation and nuclear translocation of STAT6. May be involved in development of allergic airway inflammation (asthma), a process dependent on Th2 immune response. In the NF-kappa-B-mediated inflammatory response, can relieve SETD6-dependent repression of NF-kappa-B target genes by phosphorylating the RELA subunit at 'Ser-311'. Phosphorylates VAMP2 in vitro. Phosphorylates and activates LRRK1, which phosphorylates RAB proteins involved in intracellular trafficking. Involved in late synaptic long term potention phase in CA1 hippocampal cells and long term memory maintenance. In Homo sapiens (Human), this protein is Protein kinase C zeta type (PRKCZ).